The sequence spans 551 residues: Interleukin-2 receptor subunit beta (551 aa).

An N-terminal signal peptide occupies residues Met1–Ala26. Over Thr27 to Thr240 the chain is Extracellular. Asn29, Asn43, and Asn71 each carry an N-linked (GlcNAc...) asparagine glycan. An intrachain disulfide couples Cys36 to Cys46. Cys74 and Cys86 are disulfide-bonded. One can recognise a Fibronectin type-III domain in the interval Ala134–Ala234. N-linked (GlcNAc...) asparagine glycosylation occurs at Asn149. Positions Trp220–Ser224 match the WSXWS motif motif. The chain crosses the membrane as a helical span at residues Ile241–Ile265. The Cytoplasmic segment spans residues Asn266 to Val551. The short motif at Leu278–Ser286 is the Box 1 motif element. Disordered regions lie at residues Asp393–Ser412 and Ser433–Thr476.

This sequence belongs to the type I cytokine receptor family. Type 4 subfamily. As to quaternary structure, non-covalent dimer of an alpha and a beta subunit. IL2R exists in 3 different forms: a high affinity dimer, an intermediate affinity monomer (beta subunit), and a low affinity monomer (alpha subunit). The high and intermediate affinity forms also associate with a gamma subunit. Interacts with SHB upon interleukin stimulation.

It is found in the cell membrane. Its subcellular location is the cell surface. Functionally, receptor for interleukin-2. This beta subunit is involved in receptor mediated endocytosis and transduces the mitogenic signals of IL2. Probably in association with IL15RA, involved in the stimulation of neutrophil phagocytosis by IL15. The chain is Interleukin-2 receptor subunit beta (IL2RB) from Pan troglodytes (Chimpanzee).